Here is a 402-residue protein sequence, read N- to C-terminus: Multidrug resistance protein MdtH (402 aa).

The Cytoplasmic portion of the chain corresponds to 1–12 (MSRVSQARNLGK). A helical membrane pass occupies residues 13 to 33 (YFLLIDNMLVVLVFFVVFPLI). At 34-98 (SIRFVDQMGW…GFATMGIAHE (65 aa)) the chain is on the periplasmic side. A helical transmembrane segment spans residues 99–116 (PWLLWFSCFLSGLGGTLF). Topologically, residues 117–138 (DPPRSALVVKLIRPEQRGRFFS) are cytoplasmic. Residues 139-159 (LLMMQDSAGAVIGALLGSWLL) form a helical membrane-spanning segment. Residues 160–164 (QYDFR) are Periplasmic-facing. Residues 165-185 (LVCATGAILFILCALFNAWLL) form a helical membrane-spanning segment. The Cytoplasmic segment spans residues 186–213 (PAWKLSTVRTPVREGMRRVMSDKRFVTY). A helical transmembrane segment spans residues 214-234 (VLTLAGYYMLAVQVMLMLPIM). The Periplasmic portion of the chain corresponds to 235–243 (VNDIAGSPA). The helical transmembrane segment at 244–264 (AVKWMYAIEACLSLTLLYPIA) threads the bilayer. Topologically, residues 265–276 (RWSEKRFRLEHR) are cytoplasmic. Residues 277–297 (LMAGLLVMSLSMIPIGMVGNL) traverse the membrane as a helical segment. Residues 298 to 299 (QQ) lie on the Periplasmic side of the membrane. The helical transmembrane segment at 300–320 (LFTLICAFYIGSVIAEPARET) threads the bilayer. Residues 321-339 (LSASLADARARGSYMGFSR) are Cytoplasmic-facing. A helical membrane pass occupies residues 340-360 (LGLAIGGAIGYIGGGWLFDMG). At 361–367 (KALTQPE) the chain is on the periplasmic side. A helical transmembrane segment spans residues 368-388 (LPWMMLGIIGFITFLALGWQF). Topologically, residues 389–402 (SHKRTPRRMLEPGA) are cytoplasmic.

The protein belongs to the major facilitator superfamily. DHA1 family. MdtH (TC 2.A.1.2.21) subfamily.

It is found in the cell inner membrane. This Salmonella choleraesuis (strain SC-B67) protein is Multidrug resistance protein MdtH.